The chain runs to 443 residues: Mitochondrial enolase superfamily member 1 (443 aa).

Substrate-binding positions include 24 to 26 (GSD) and tyrosine 34. Serine 148 is modified (phosphoserine). Lysine 220 provides a ligand contact to substrate. Lysine 222 (proton donor/acceptor) is an active-site residue. Aspartate 250 is a Mg(2+) binding site. Substrate is bound by residues asparagine 252, glutamate 276, glutamate 305, 355–357 (HAG), and glutamate 386. Positions 276 and 305 each coordinate Mg(2+). Histidine 355 is a catalytic residue.

This sequence belongs to the mandelate racemase/muconate lactonizing enzyme family. ENOSF1 subfamily. The cofactor is Mg(2+). Post-translationally, could be sumoylated.

The protein resides in the mitochondrion. The enzyme catalyses L-fuconate = 2-dehydro-3-deoxy-L-fuconate + H2O. Its function is as follows. Plays a role in the catabolism of L-fucose, a sugar that is part of the carbohydrates that are attached to cellular glycoproteins. Catalyzes the dehydration of L-fuconate to 2-keto-3-deoxy-L-fuconate by the abstraction of the 2-proton to generate an enediolate intermediate that is stabilized by the magnesium ion. May down-regulate thymidylate synthase activity, possibly already at the RNA level, by promoting the degradation of TYMS mRNA via an antisense RNA-based mechanism. The sequence is that of Mitochondrial enolase superfamily member 1 (ENOSF1) from Bos taurus (Bovine).